Reading from the N-terminus, the 125-residue chain is Snaclec VP12 subunit B (125 aa).

3 cysteine pairs are disulfide-bonded: C4–C15, C32–C121, and C98–C113. A C-type lectin domain is found at 11–122 (FEKYCYKVFQ…CNDPRYFVCK (112 aa)).

Belongs to the snaclec family. Heterodimer of subunits alpha and beta; disulfide-linked. In terms of tissue distribution, expressed by the venom gland.

The protein resides in the secreted. Functionally, inhibits integrin alpha-2/beta-1- (ITGA2/ITGB1) dependent melanoma metastasis. The sequence is that of Snaclec VP12 subunit B from Daboia palaestinae (Palestine viper).